A 124-amino-acid polypeptide reads, in one-letter code: Large ribosomal subunit protein uL18 (124 aa).

It belongs to the universal ribosomal protein uL18 family. In terms of assembly, part of the 50S ribosomal subunit; part of the 5S rRNA/L5/L18/L25 subcomplex. Contacts the 5S and 23S rRNAs.

Its function is as follows. This is one of the proteins that bind and probably mediate the attachment of the 5S RNA into the large ribosomal subunit, where it forms part of the central protuberance. The chain is Large ribosomal subunit protein uL18 from Orientia tsutsugamushi (strain Ikeda) (Rickettsia tsutsugamushi).